Reading from the N-terminus, the 230-residue chain is Carbohydrate deacetylase (230 aa).

The Mg(2+) site is built by H59 and H123.

Belongs to the YdjC deacetylase family. Homodimer. Mg(2+) serves as cofactor.

In terms of biological role, probably catalyzes the deacetylation of acetylated carbohydrates an important step in the degradation of oligosaccharides. This chain is Carbohydrate deacetylase, found in Oceanobacillus iheyensis (strain DSM 14371 / CIP 107618 / JCM 11309 / KCTC 3954 / HTE831).